The chain runs to 128 residues: Sulfurtransferase TusD (128 aa).

Residue Cys-78 is the Cysteine persulfide intermediate of the active site.

It belongs to the DsrE/TusD family. Heterohexamer, formed by a dimer of trimers. The hexameric TusBCD complex contains 2 copies each of TusB, TusC and TusD. The TusBCD complex interacts with TusE.

Its subcellular location is the cytoplasm. In terms of biological role, part of a sulfur-relay system required for 2-thiolation of 5-methylaminomethyl-2-thiouridine (mnm(5)s(2)U) at tRNA wobble positions. Accepts sulfur from TusA and transfers it in turn to TusE. The sequence is that of Sulfurtransferase TusD from Escherichia fergusonii (strain ATCC 35469 / DSM 13698 / CCUG 18766 / IAM 14443 / JCM 21226 / LMG 7866 / NBRC 102419 / NCTC 12128 / CDC 0568-73).